Consider the following 292-residue polypeptide: tRNA-splicing endonuclease (292 aa).

Residues Tyr231, His238, and Lys267 contribute to the active site.

It belongs to the tRNA-intron endonuclease family. Archaeal long subfamily. Homodimer.

The enzyme catalyses pretRNA = a 3'-half-tRNA molecule with a 5'-OH end + a 5'-half-tRNA molecule with a 2',3'-cyclic phosphate end + an intron with a 2',3'-cyclic phosphate and a 5'-hydroxyl terminus.. Endonuclease that removes tRNA introns. Cleaves pre-tRNA at the 5'- and 3'-splice sites to release the intron. The products are an intron and two tRNA half-molecules bearing 2',3' cyclic phosphate and 5'-OH termini. Recognizes a pseudosymmetric substrate in which 2 bulged loops of 3 bases are separated by a stem of 4 bp. The polypeptide is tRNA-splicing endonuclease (Thermoplasma volcanium (strain ATCC 51530 / DSM 4299 / JCM 9571 / NBRC 15438 / GSS1)).